A 250-amino-acid polypeptide reads, in one-letter code: Tetrathionate reductase subunit B (250 aa).

The segment at residues 1–33 (MWTGVNMDSSKRQFLQQLGVLTAGASLVPLAEA) is a signal peptide (tat-type signal). 4Fe-4S ferredoxin-type domains follow at residues 50-79 (YAML…PQGA), 97-128 (VTNV…QRED), and 129-158 (GIVV…INHE). Residues Cys59, Cys62, Cys65, Cys69, Cys106, Cys109, Cys114, Cys118, Cys138, Cys141, Cys144, Cys148, Cys165, Cys168, Cys180, and Cys184 each contribute to the [4Fe-4S] cluster site.

In terms of assembly, probably composed of three subunits: TtrA, TtrB and TtrC. In terms of processing, predicted to be exported by the Tat system. The position of the signal peptide cleavage has not been experimentally proven.

It localises to the periplasm. It is found in the cell inner membrane. Functionally, part of a membrane-bound tetrathionate reductase that catalyzes the reduction of tetrathionate to thiosulfate. TtrB is probably involved in transfer of electrons from TtrC to TtrA. During mice infection, the ability to use tetrathionate as an electron acceptor is a growth advantage for S.typhimurium over the competing microbiota in the lumen of the inflamed gut. This chain is Tetrathionate reductase subunit B (ttrB), found in Salmonella typhimurium (strain LT2 / SGSC1412 / ATCC 700720).